The sequence spans 91 residues: MSRTIFCTFLQREADGQDFQLYPGELGKRIYNEISKEAWAQWQHKQTMLINEKKLSMMSPEHRKLLEQEMVQFLFEGKDVHIEGYTPPEKQ.

Belongs to the Fe(2+)-trafficking protein family. As to quaternary structure, monomer.

Could be a mediator in iron transactions between iron acquisition and iron-requiring processes, such as synthesis and/or repair of Fe-S clusters in biosynthetic enzymes. The sequence is that of Probable Fe(2+)-trafficking protein from Klebsiella pneumoniae (strain 342).